We begin with the raw amino-acid sequence, 193 residues long: Holliday junction branch migration complex subunit RuvA (193 aa).

Positions 1 to 64 (MIGRIAGILL…EDAHLLYGFL (64 aa)) are domain I. Positions 65–139 (TPQERTTFRE…GKLGADLGAL (75 aa)) are domain II. The flexible linker stretch occupies residues 139–143 (LAGAA). A domain III region spans residues 144–193 (SPSDHAADILNALVALGYSEKEGLAAIKNVPAGTGVSDGIKLALKALSKA).

The protein belongs to the RuvA family. Homotetramer. Forms an RuvA(8)-RuvB(12)-Holliday junction (HJ) complex. HJ DNA is sandwiched between 2 RuvA tetramers; dsDNA enters through RuvA and exits via RuvB. An RuvB hexamer assembles on each DNA strand where it exits the tetramer. Each RuvB hexamer is contacted by two RuvA subunits (via domain III) on 2 adjacent RuvB subunits; this complex drives branch migration. In the full resolvosome a probable DNA-RuvA(4)-RuvB(12)-RuvC(2) complex forms which resolves the HJ.

It is found in the cytoplasm. In terms of biological role, the RuvA-RuvB-RuvC complex processes Holliday junction (HJ) DNA during genetic recombination and DNA repair, while the RuvA-RuvB complex plays an important role in the rescue of blocked DNA replication forks via replication fork reversal (RFR). RuvA specifically binds to HJ cruciform DNA, conferring on it an open structure. The RuvB hexamer acts as an ATP-dependent pump, pulling dsDNA into and through the RuvAB complex. HJ branch migration allows RuvC to scan DNA until it finds its consensus sequence, where it cleaves and resolves the cruciform DNA. The sequence is that of Holliday junction branch migration complex subunit RuvA from Burkholderia vietnamiensis (strain G4 / LMG 22486) (Burkholderia cepacia (strain R1808)).